The following is a 63-amino-acid chain: Large ribosomal subunit protein bL28 (63 aa).

It belongs to the bacterial ribosomal protein bL28 family.

This chain is Large ribosomal subunit protein bL28, found in Petrotoga mobilis (strain DSM 10674 / SJ95).